The primary structure comprises 209 residues: Transmembrane domain-containing protein TMIGD3 (209 aa).

The first 15 residues, 1–15 (MEFLLLLSLALFSDA), serve as a signal peptide directing secretion. A helical transmembrane segment spans residues 152 to 172 (SILIICILITSLGIIFIISHL). Residues 179 to 201 (QRNREVTGKSISRNPQASQGPSM) are disordered. Residues 187–201 (KSISRNPQASQGPSM) are compositionally biased toward polar residues.

It localises to the membrane. The chain is Transmembrane domain-containing protein TMIGD3 (Tmigd3) from Mus musculus (Mouse).